Consider the following 447-residue polypeptide: Probable aspartic protease At2g35615 (447 aa).

The first 20 residues, 1-20, serve as a signal peptide directing secretion; it reads MATQILLCFFLFFSVTLSSS. N25 carries an N-linked (GlcNAc...) asparagine glycan. The region spanning 85–439 is the Peptidase A1 domain; sequence FFMSITIGTP…DLETRTVSFQ (355 aa). D103 is a catalytic residue. An N-linked (GlcNAc...) asparagine glycan is attached at N251. Residue D326 is part of the active site.

Belongs to the peptidase A1 family.

The protein resides in the secreted. The sequence is that of Probable aspartic protease At2g35615 from Arabidopsis thaliana (Mouse-ear cress).